A 336-amino-acid chain; its full sequence is Probable deoxyhypusine synthase (336 aa).

The active-site Nucleophile is the lysine 308.

The protein belongs to the deoxyhypusine synthase family. The cofactor is NAD(+).

The enzyme catalyses [eIF5A protein]-L-lysine + spermidine = [eIF5A protein]-deoxyhypusine + propane-1,3-diamine. The protein operates within protein modification; eIF5A hypusination. In terms of biological role, catalyzes the NAD-dependent oxidative cleavage of spermidine and the subsequent transfer of the butylamine moiety of spermidine to the epsilon-amino group of a specific lysine residue of the eIF-5A precursor protein to form the intermediate deoxyhypusine residue. This chain is Probable deoxyhypusine synthase, found in Thermococcus gammatolerans (strain DSM 15229 / JCM 11827 / EJ3).